The sequence spans 82 residues: MAKYTIVDKDTCIACGACGAAAPDIYDYDDEGIAFVTLDENKGVVEVPEVLEEDMIDAFEGCPTDSIKVADEPFEGDPLKFE.

One can recognise a 4Fe-4S ferredoxin-type domain in the interval 3 to 31 (KYTIVDKDTCIACGACGAAAPDIYDYDDE). Residues C12, C15, C18, and C62 each contribute to the [4Fe-4S] cluster site.

[4Fe-4S] cluster serves as cofactor.

Functionally, ferredoxins are iron-sulfur proteins that transfer electrons in a wide variety of metabolic reactions. This ferredoxin may act as a phosphodonor to cytochrome P450 BioI. The chain is Ferredoxin (fer) from Bacillus subtilis (strain 168).